A 218-amino-acid polypeptide reads, in one-letter code: Adenylate kinase (218 aa).

Position 12–17 (12–17 (GAGKGT)) interacts with ATP. Residues 32 to 61 (STGDMLREARSSGTEMGKRVAEVMDRGELV) form an NMP region. Residues threonine 33, arginine 38, 59–61 (ELV), 85–88 (GFPR), and glutamine 92 each bind AMP. An LID region spans residues 126-164 (GRFTCGNCGEVYHDVTKPTKEPGKCDVCGSTDLRRRADD). Residue arginine 127 coordinates ATP. 2 residues coordinate Zn(2+): cysteine 130 and cysteine 133. 136-137 (VY) provides a ligand contact to ATP. Zn(2+) contacts are provided by cysteine 150 and cysteine 153. Residues arginine 161 and arginine 172 each contribute to the AMP site. Alanine 200 is an ATP binding site.

The protein belongs to the adenylate kinase family. Monomer.

The protein resides in the cytoplasm. It catalyses the reaction AMP + ATP = 2 ADP. It participates in purine metabolism; AMP biosynthesis via salvage pathway; AMP from ADP: step 1/1. Catalyzes the reversible transfer of the terminal phosphate group between ATP and AMP. Plays an important role in cellular energy homeostasis and in adenine nucleotide metabolism. This is Adenylate kinase from Paracoccus denitrificans (strain Pd 1222).